The following is a 710-amino-acid chain: Early transcription factor 82 kDa subunit (710 aa).

Belongs to the poxviridae VETF large subunit family. As to quaternary structure, heterodimer of a 70 kDa and a 82 kDa subunit. Part of the early transcription complex composed of ETF, RAP94/OPG109, and the DNA-directed RNA polymerase.

The protein localises to the virion. Acts with RNA polymerase to initiate transcription from early gene promoters. Is recruited by the RPO-associated protein of 94 kDa RAP94/OPG109 to form the early transcription complex, which also contains the core RNA polymerase. ETF heterodimer binds to early gene promoters. This is Early transcription factor 82 kDa subunit (OPG133) from Variola virus (isolate Human/India/Ind3/1967) (VARV).